The following is a 713-amino-acid chain: Cyclomaltodextrin glucanotransferase (713 aa).

Residues 1–27 (MKRFMKLTAVWTLWLSLTLGLLSPVHA) form the signal peptide. The tract at residues 28–165 (APDTSVSNKQ…NIKVIIDFAP (138 aa)) is A1. The Ca(2+) site is built by D54, N56, N59, and N60. The cysteines at positions 70 and 77 are disulfide-linked. Ca(2+) is bound by residues G78 and D80. 127 to 128 (YW) is a substrate binding site. Residue N166 coordinates Ca(2+). Residues 166–229 (NHTSPASSDD…NLYDLADLNH (64 aa)) form a b region. H167 provides a ligand contact to substrate. Residue I217 coordinates Ca(2+). Residue 220–223 (NLYD) participates in substrate binding. D226 contributes to the Ca(2+) binding site. The A2 stretch occupies residues 230-433 (NNSSVDVYLK…LRKSNPAIAY (204 aa)). A substrate-binding site is contributed by R254. Catalysis depends on D256, which acts as the Nucleophile. 259 to 260 (KH) serves as a coordination point for substrate. Ca(2+) is bound at residue H260. E284 acts as the Proton donor in catalysis. H354, D398, and R402 together coordinate substrate. The c stretch occupies residues 434-522 (GSTHERWINN…GTAVWQYTTD (89 aa)). The d stretch occupies residues 523 to 609 (ATTPIIGNVG…SNIYDNFEVL (87 aa)). Positions 526-607 (PIIGNVGPMM…AASNIYDNFE (82 aa)) constitute an IPT/TIG domain. Residues 608–713 (VLTGDQVTVR…TATVNVNWQP (106 aa)) form the CBM20 domain. Positions 610–713 (TGDQVTVRFV…TATVNVNWQP (104 aa)) are e.

This sequence belongs to the glycosyl hydrolase 13 family. Monomer. Ca(2+) serves as cofactor.

The protein resides in the secreted. It catalyses the reaction Cyclizes part of a (1-&gt;4)-alpha-D-glucan chain by formation of a (1-&gt;4)-alpha-D-glucosidic bond.. This is Cyclomaltodextrin glucanotransferase (cgt) from Bacillus sp. (strain 1011).